The primary structure comprises 282 residues: Nicotianamine synthase-like 5 protein (282 aa).

Belongs to the nicotianamine synthase (NAS)-like family.

The chain is Nicotianamine synthase-like 5 protein (NAS5) from Hordeum vulgare (Barley).